A 437-amino-acid chain; its full sequence is Membrane protein NfeD1b (437 aa).

The next 5 membrane-spanning stretches (helical) occupy residues 2–22 (LQIK…LLGV), 231–251 (WLTN…GLTV), 253–273 (LFSP…LLFF), 288–308 (LLFI…GGII), and 316–336 (IIAS…SLLI).

It belongs to the NfeD family.

The protein resides in the cell membrane. The protein is Membrane protein NfeD1b of Bacillus subtilis (strain 168).